We begin with the raw amino-acid sequence, 523 residues long: 2-hydroxyisoflavanone synthase (523 aa).

The helical transmembrane segment at 2-22 threads the bilayer; that stretch reads LVELAITLLVIALFIHLRPTL. Cys450 contributes to the heme binding site.

This sequence belongs to the cytochrome P450 family. Heme is required as a cofactor.

The protein resides in the microsome membrane. The enzyme catalyses (2S)-liquiritigenin + reduced [NADPH--hemoprotein reductase] + O2 = (2R,3S)-2,4',7-trihydroxyisoflavanone + oxidized [NADPH--hemoprotein reductase] + H2O + H(+). The catalysed reaction is (2S)-naringenin + reduced [NADPH--hemoprotein reductase] + O2 = 2-hydroxy-2,3-dihydrogenistein + oxidized [NADPH--hemoprotein reductase] + H2O + H(+). In terms of biological role, 2-hydroxyisoflavanone synthase, which catalyzes the hydroxylation associated with 1,2-aryl migration of flavanones. Converts liquiritigenin and naringenin into highly unstable precursors of the isoflavones daidzein and genistein. Acts only on substrates with (2S)-chirality. The protein is 2-hydroxyisoflavanone synthase (CYP93C2) of Glycyrrhiza echinata (Licorice).